Here is a 364-residue protein sequence, read N- to C-terminus: Lipoyl synthase, chloroplastic (364 aa).

The N-terminal 70 residues, 1-70 (MEQTLFNPSI…PNVKKPEWLR (70 aa)), are a transit peptide targeting the chloroplast. Residues 32–52 (STNSPSSNTKTTTVTVPSKKT) show a composition bias toward low complexity. Residues 32–64 (STNSPSSNTKTTTVTVPSKKTMGPYTGRDPNVK) form a disordered region. [4Fe-4S] cluster contacts are provided by C95, C100, C106, C126, C130, C133, and S341. A Radical SAM core domain is found at 109–330 (GGGDGIATAT…KEYGESIGFR (222 aa)).

Belongs to the radical SAM superfamily. Lipoyl synthase family. It depends on [4Fe-4S] cluster as a cofactor.

It localises to the plastid. The protein localises to the chloroplast. The enzyme catalyses [[Fe-S] cluster scaffold protein carrying a second [4Fe-4S](2+) cluster] + N(6)-octanoyl-L-lysyl-[protein] + 2 oxidized [2Fe-2S]-[ferredoxin] + 2 S-adenosyl-L-methionine + 4 H(+) = [[Fe-S] cluster scaffold protein] + N(6)-[(R)-dihydrolipoyl]-L-lysyl-[protein] + 4 Fe(3+) + 2 hydrogen sulfide + 2 5'-deoxyadenosine + 2 L-methionine + 2 reduced [2Fe-2S]-[ferredoxin]. It functions in the pathway protein modification; protein lipoylation via endogenous pathway; protein N(6)-(lipoyl)lysine from octanoyl-[acyl-carrier-protein]: step 2/2. In terms of biological role, catalyzes the radical-mediated insertion of two sulfur atoms into the C-6 and C-8 positions of the octanoyl moiety bound to the lipoyl domains of lipoate-dependent enzymes, thereby converting the octanoylated domains into lipoylated derivatives. The chain is Lipoyl synthase, chloroplastic from Ricinus communis (Castor bean).